Reading from the N-terminus, the 126-residue chain is Small ribosomal subunit protein uS13 (126 aa).

Residues 92 to 126 (HRMGLPVRGQRTRTNARTRRGRRQTVAGKKKAPGK) form a disordered region. Over residues 101–126 (QRTRTNARTRRGRRQTVAGKKKAPGK) the composition is skewed to basic residues.

The protein belongs to the universal ribosomal protein uS13 family. In terms of assembly, part of the 30S ribosomal subunit. Forms a loose heterodimer with protein S19. Forms two bridges to the 50S subunit in the 70S ribosome.

Located at the top of the head of the 30S subunit, it contacts several helices of the 16S rRNA. In the 70S ribosome it contacts the 23S rRNA (bridge B1a) and protein L5 of the 50S subunit (bridge B1b), connecting the 2 subunits; these bridges are implicated in subunit movement. Contacts the tRNAs in the A and P-sites. The protein is Small ribosomal subunit protein uS13 of Nostoc punctiforme (strain ATCC 29133 / PCC 73102).